The sequence spans 299 residues: Phosphoribosylaminoimidazole-succinocarboxamide synthase (299 aa).

Belongs to the SAICAR synthetase family.

It catalyses the reaction 5-amino-1-(5-phospho-D-ribosyl)imidazole-4-carboxylate + L-aspartate + ATP = (2S)-2-[5-amino-1-(5-phospho-beta-D-ribosyl)imidazole-4-carboxamido]succinate + ADP + phosphate + 2 H(+). It functions in the pathway purine metabolism; IMP biosynthesis via de novo pathway; 5-amino-1-(5-phospho-D-ribosyl)imidazole-4-carboxamide from 5-amino-1-(5-phospho-D-ribosyl)imidazole-4-carboxylate: step 1/2. This chain is Phosphoribosylaminoimidazole-succinocarboxamide synthase, found in Desulfatibacillum aliphaticivorans.